The primary structure comprises 497 residues: Probable cytosol aminopeptidase (497 aa).

Residues lysine 267 and aspartate 272 each contribute to the Mn(2+) site. Residue lysine 279 is part of the active site. The Mn(2+) site is built by aspartate 290, aspartate 349, and glutamate 351. Arginine 353 is an active-site residue.

This sequence belongs to the peptidase M17 family. Mn(2+) serves as cofactor.

It localises to the cytoplasm. It catalyses the reaction Release of an N-terminal amino acid, Xaa-|-Yaa-, in which Xaa is preferably Leu, but may be other amino acids including Pro although not Arg or Lys, and Yaa may be Pro. Amino acid amides and methyl esters are also readily hydrolyzed, but rates on arylamides are exceedingly low.. The catalysed reaction is Release of an N-terminal amino acid, preferentially leucine, but not glutamic or aspartic acids.. Its function is as follows. Presumably involved in the processing and regular turnover of intracellular proteins. Catalyzes the removal of unsubstituted N-terminal amino acids from various peptides. The protein is Probable cytosol aminopeptidase of Pseudomonas entomophila (strain L48).